The following is a 114-amino-acid chain: UPF0145 protein TT_C1581 (114 aa).

Belongs to the UPF0145 family.

The chain is UPF0145 protein TT_C1581 from Thermus thermophilus (strain ATCC BAA-163 / DSM 7039 / HB27).